The following is a 391-amino-acid chain: Enoyl-CoA delta isomerase 2 (391 aa).

Residues 1–36 (MAAVTWSRARCWCPSLLQVLRLPVTKLHLGRPAMRA) constitute a mitochondrion transit peptide. The 86-residue stretch at 37-122 (TQQDFENAMN…VSSLSSSSEA (86 aa)) folds into the ACB domain. The residue at position 49 (K49) is an N6-acetyllysine; alternate. An N6-succinyllysine; alternate modification is found at K49. At K53 the chain carries N6-succinyllysine. At K60 the chain carries N6-acetyllysine; alternate. An N6-succinyllysine; alternate modification is found at K60. An acyl-CoA is bound at residue 64–68 (YALYK). Residues K68, K79, and K88 each carry the N6-succinyllysine modification. K90 carries the post-translational modification N6-acetyllysine; alternate. Position 90 is an N6-succinyllysine; alternate (K90). Position 90 (K90) interacts with an acyl-CoA. Position 99 is a phosphoserine (S99). Y109 provides a ligand contact to an acyl-CoA. A Phosphoserine modification is found at S117. 2 positions are modified to N6-succinyllysine: K127 and K159. The segment at 149–319 (TKITFNRPSK…AQGLVTEVFP (171 aa)) is ECH-like. Residue 196–200 (SGNDL) participates in substrate binding. An N6-succinyllysine modification is found at K286. The Microbody targeting signal motif lies at 389–391 (PKL).

The protein in the C-terminal section; belongs to the enoyl-CoA hydratase/isomerase family. In terms of tissue distribution, liver (at protein level).

Its subcellular location is the peroxisome matrix. The protein resides in the mitochondrion. It catalyses the reaction a (3Z)-enoyl-CoA = a 4-saturated (2E)-enoyl-CoA. The enzyme catalyses a (3E)-enoyl-CoA = a 4-saturated (2E)-enoyl-CoA. The catalysed reaction is (2E)-tetradecenoyl-CoA = (3Z)-tetradecenoyl-CoA. It carries out the reaction (3E)-tetradecenoyl-CoA = (2E)-tetradecenoyl-CoA. It catalyses the reaction (3E)-octenoyl-CoA = (2E)-octenoyl-CoA. The enzyme catalyses (3Z)-octenoyl-CoA = (2E)-octenoyl-CoA. The catalysed reaction is (3E)-nonenoyl-CoA = (2E)-nonenoyl-CoA. Its pathway is lipid metabolism; fatty acid beta-oxidation. Its function is as follows. Able to isomerize both 3-cis and 3-trans double bonds into the 2-trans form in a range of enoyl-CoA species. Has a preference for 3-trans substrates. This chain is Enoyl-CoA delta isomerase 2, found in Rattus norvegicus (Rat).